The primary structure comprises 99 residues: MDPVDPNLEPWNHPGSQPRTPCNKCHCKKCCYHCPVCFLNKGLGISYGRKKRRQRRGPPQGGQAHQVPIPKQPSSQPRGDPTGPKEQKKKVESEAETDP.

The tract at residues 1-22 is disordered; it reads MDPVDPNLEPWNHPGSQPRTPC. The segment at 1 to 24 is interaction with human CREBBP; that stretch reads MDPVDPNLEPWNHPGSQPRTPCNK. Residues 1 to 48 form a transactivation region; the sequence is MDPVDPNLEPWNHPGSQPRTPCNKCHCKKCCYHCPVCFLNKGLGISYG. Cysteine 22, cysteine 25, and cysteine 27 together coordinate Zn(2+). A cysteine-rich region spans residues 22–37; it reads CNKCHCKKCCYHCPVC. The residue at position 28 (lysine 28) is an N6-acetyllysine; by host PCAF. 4 residues coordinate Zn(2+): cysteine 30, histidine 33, cysteine 34, and cysteine 37. Residues 38–48 are core; sequence FLNKGLGISYG. The tract at residues 48-99 is disordered; it reads GRKKRRQRRGPPQGGQAHQVPIPKQPSSQPRGDPTGPKEQKKKVESEAETDP. The Nuclear localization signal, RNA-binding (TAR), and protein transduction motif lies at 49–57; that stretch reads RKKRRQRRG. The tract at residues 49–86 is interaction with the host capping enzyme RNGTT; sequence RKKRRQRRGPPQGGQAHQVPIPKQPSSQPRGDPTGPKE. N6-acetyllysine; by host EP300 and GCN5L2 occurs at positions 50 and 51. Asymmetric dimethylarginine; by host PRMT6 is present on residues arginine 52 and arginine 53. Lysine 71 is covalently cross-linked (Glycyl lysine isopeptide (Lys-Gly) (interchain with G-Cter in ubiquitin)). A Cell attachment site motif is present at residues 78–80; it reads RGD. Basic and acidic residues predominate over residues 83–93; that stretch reads GPKEQKKKVES.

Belongs to the lentiviruses Tat family. Interacts with host CCNT1. Associates with the P-TEFb complex composed at least of Tat, P-TEFb (CDK9 and CCNT1), TAR RNA, RNA Pol II. Recruits the HATs CREBBP, TAF1/TFIID, EP300, PCAF and GCN5L2. Interacts with host KAT5/Tip60; this interaction targets the latter to degradation. Interacts with the host deacetylase SIRT1. Interacts with host capping enzyme RNGTT; this interaction stimulates RNGTT. Binds to host KDR, and to the host integrins ITGAV/ITGB3 and ITGA5/ITGB1. Interacts with host KPNB1/importin beta-1 without previous binding to KPNA1/importin alpha-1. Interacts with EIF2AK2. Interacts with host nucleosome assembly protein NAP1L1; this interaction may be required for the transport of Tat within the nucleus, since the two proteins interact at the nuclear rim. Interacts with host C1QBP/SF2P32; this interaction involves lysine-acetylated Tat. Interacts with the host chemokine receptors CCR2, CCR3 and CXCR4. Interacts with host DPP4/CD26; this interaction may trigger an anti-proliferative effect. Interacts with host LDLR. Interacts with the host extracellular matrix metalloproteinase MMP1. Interacts with host PRMT6; this interaction mediates Tat's methylation. Interacts with, and is ubiquitinated by MDM2/Hdm2. Interacts with host PSMC3 and HTATIP2. Interacts with STAB1; this interaction may overcome SATB1-mediated repression of IL2 and IL2RA (interleukin) in T cells by binding to the same domain than HDAC1. Interacts (when acetylated) with human CDK13, thereby increasing HIV-1 mRNA splicing and promoting the production of the doubly spliced HIV-1 protein Nef. Interacts with host TBP; this interaction modulates the activity of transcriptional pre-initiation complex. Interacts with host RELA. Interacts with host PLSCR1; this interaction negatively regulates Tat transactivation activity by altering its subcellular distribution. In terms of processing, asymmetrical arginine methylation by host PRMT6 seems to diminish the transactivation capacity of Tat and affects the interaction with host CCNT1. Post-translationally, acetylation by EP300, CREBBP, GCN5L2/GCN5 and PCAF regulates the transactivation activity of Tat. EP300-mediated acetylation of Lys-50 promotes dissociation of Tat from the TAR RNA through the competitive binding to PCAF's bromodomain. In addition, the non-acetylated Tat's N-terminus can also interact with PCAF. PCAF-mediated acetylation of Lys-28 enhances Tat's binding to CCNT1. Lys-50 is deacetylated by SIRT1. Polyubiquitination by host MDM2 does not target Tat to degradation, but activates its transactivation function and fosters interaction with CCNT1 and TAR RNA. In terms of processing, phosphorylated by EIF2AK2 on serine and threonine residues adjacent to the basic region important for TAR RNA binding and function. Phosphorylation of Tat by EIF2AK2 is dependent on the prior activation of EIF2AK2 by dsRNA.

It localises to the host nucleus. The protein resides in the host nucleolus. It is found in the host cytoplasm. Its subcellular location is the secreted. Transcriptional activator that increases RNA Pol II processivity, thereby increasing the level of full-length viral transcripts. Recognizes a hairpin structure at the 5'-LTR of the nascent viral mRNAs referred to as the transactivation responsive RNA element (TAR) and recruits the cyclin T1-CDK9 complex (P-TEFb complex) that will in turn hyperphosphorylate the RNA polymerase II to allow efficient elongation. The CDK9 component of P-TEFb and other Tat-activated kinases hyperphosphorylate the C-terminus of RNA Pol II that becomes stabilized and much more processive. Other factors such as HTATSF1/Tat-SF1, SUPT5H/SPT5, and HTATIP2 are also important for Tat's function. Besides its effect on RNA Pol II processivity, Tat induces chromatin remodeling of proviral genes by recruiting the histone acetyltransferases (HATs) CREBBP, EP300 and PCAF to the chromatin. This also contributes to the increase in proviral transcription rate, especially when the provirus integrates in transcriptionally silent region of the host genome. To ensure maximal activation of the LTR, Tat mediates nuclear translocation of NF-kappa-B by interacting with host RELA. Through its interaction with host TBP, Tat may also modulate transcription initiation. Tat can reactivate a latently infected cell by penetrating in it and transactivating its LTR promoter. In the cytoplasm, Tat is thought to act as a translational activator of HIV-1 mRNAs. Its function is as follows. Extracellular circulating Tat can be endocytosed by surrounding uninfected cells via the binding to several surface receptors such as CD26, CXCR4, heparan sulfate proteoglycans (HSPG) or LDLR. Neurons are rarely infected, but they internalize Tat via their LDLR. Through its interaction with nuclear HATs, Tat is potentially able to control the acetylation-dependent cellular gene expression. Modulates the expression of many cellular genes involved in cell survival, proliferation or in coding for cytokines or cytokine receptors. Tat plays a role in T-cell and neurons apoptosis. Tat induced neurotoxicity and apoptosis probably contribute to neuroAIDS. Circulating Tat also acts as a chemokine-like and/or growth factor-like molecule that binds to specific receptors on the surface of the cells, affecting many cellular pathways. In the vascular system, Tat binds to ITGAV/ITGB3 and ITGA5/ITGB1 integrins dimers at the surface of endothelial cells and competes with bFGF for heparin-binding sites, leading to an excess of soluble bFGF. The chain is Protein Tat from Homo sapiens (Human).